We begin with the raw amino-acid sequence, 242 residues long: Biosynthetic peptidoglycan transglycosylase (242 aa).

A helical membrane pass occupies residues 19 to 39; it reads LMVVLAVFWGGGIALFSVAPV.

The protein belongs to the glycosyltransferase 51 family.

The protein resides in the cell inner membrane. It catalyses the reaction [GlcNAc-(1-&gt;4)-Mur2Ac(oyl-L-Ala-gamma-D-Glu-L-Lys-D-Ala-D-Ala)](n)-di-trans,octa-cis-undecaprenyl diphosphate + beta-D-GlcNAc-(1-&gt;4)-Mur2Ac(oyl-L-Ala-gamma-D-Glu-L-Lys-D-Ala-D-Ala)-di-trans,octa-cis-undecaprenyl diphosphate = [GlcNAc-(1-&gt;4)-Mur2Ac(oyl-L-Ala-gamma-D-Glu-L-Lys-D-Ala-D-Ala)](n+1)-di-trans,octa-cis-undecaprenyl diphosphate + di-trans,octa-cis-undecaprenyl diphosphate + H(+). The protein operates within cell wall biogenesis; peptidoglycan biosynthesis. Its function is as follows. Peptidoglycan polymerase that catalyzes glycan chain elongation from lipid-linked precursors. The chain is Biosynthetic peptidoglycan transglycosylase from Escherichia coli (strain ATCC 8739 / DSM 1576 / NBRC 3972 / NCIMB 8545 / WDCM 00012 / Crooks).